The primary structure comprises 260 residues: NAD-capped RNA hydrolase NudC (260 aa).

Substrate is bound at residue R69. Zn(2+)-binding residues include C98 and C101. E111 lines the substrate pocket. The Zn(2+) site is built by C116 and C119. Y124 contributes to the substrate binding site. A Nudix hydrolase domain is found at 125–248; it reads PQIAPCIIVA…TVARRLIEDT (124 aa). Positions 158, 174, and 178 each coordinate a divalent metal cation. Positions 159–180 match the Nudix box motif; that stretch reads GFVEVGETLEQTVVREVMEESQ. Residue 192 to 199 participates in substrate binding; that stretch reads QPWPFPHS. Position 219 (E219) interacts with a divalent metal cation. A241 serves as a coordination point for substrate.

The protein belongs to the Nudix hydrolase family. NudC subfamily. As to quaternary structure, homodimer. Mg(2+) is required as a cofactor. Mn(2+) serves as cofactor. It depends on Zn(2+) as a cofactor.

It catalyses the reaction a 5'-end NAD(+)-phospho-ribonucleoside in mRNA + H2O = a 5'-end phospho-adenosine-phospho-ribonucleoside in mRNA + beta-nicotinamide D-ribonucleotide + 2 H(+). It carries out the reaction NAD(+) + H2O = beta-nicotinamide D-ribonucleotide + AMP + 2 H(+). The catalysed reaction is NADH + H2O = reduced beta-nicotinamide D-ribonucleotide + AMP + 2 H(+). Functionally, mRNA decapping enzyme that specifically removes the nicotinamide adenine dinucleotide (NAD) cap from a subset of mRNAs by hydrolyzing the diphosphate linkage to produce nicotinamide mononucleotide (NMN) and 5' monophosphate mRNA. The NAD-cap is present at the 5'-end of some mRNAs and stabilizes RNA against 5'-processing. Has preference for mRNAs with a 5'-end purine. Catalyzes the hydrolysis of a broad range of dinucleotide pyrophosphates. This chain is NAD-capped RNA hydrolase NudC, found in Pectobacterium atrosepticum (strain SCRI 1043 / ATCC BAA-672) (Erwinia carotovora subsp. atroseptica).